The chain runs to 84 residues: Inactive transposase YbfQ (84 aa).

The sequence is that of Inactive transposase YbfQ (ybfQ) from Escherichia coli (strain K12).